The sequence spans 834 residues: Leucine--tRNA ligase (834 aa).

Residues 36 to 46 (PYPSGKIHVGH) carry the 'HIGH' region motif. Positions 602–606 (KMSKS) match the 'KMSKS' region motif. ATP is bound at residue Lys-605.

The protein belongs to the class-I aminoacyl-tRNA synthetase family.

Its subcellular location is the cytoplasm. The enzyme catalyses tRNA(Leu) + L-leucine + ATP = L-leucyl-tRNA(Leu) + AMP + diphosphate. The polypeptide is Leucine--tRNA ligase (Rickettsia canadensis (strain McKiel)).